Here is a 176-residue protein sequence, read N- to C-terminus: ATP-dependent protease subunit HslV (176 aa).

Thr6 is a catalytic residue. Na(+) is bound by residues Ser161, Cys164, and Thr167.

The protein belongs to the peptidase T1B family. HslV subfamily. As to quaternary structure, a double ring-shaped homohexamer of HslV is capped on each side by a ring-shaped HslU homohexamer. The assembly of the HslU/HslV complex is dependent on binding of ATP.

It is found in the cytoplasm. It carries out the reaction ATP-dependent cleavage of peptide bonds with broad specificity.. Its activity is regulated as follows. Allosterically activated by HslU binding. Its function is as follows. Protease subunit of a proteasome-like degradation complex believed to be a general protein degrading machinery. This chain is ATP-dependent protease subunit HslV, found in Pseudothermotoga lettingae (strain ATCC BAA-301 / DSM 14385 / NBRC 107922 / TMO) (Thermotoga lettingae).